The primary structure comprises 103 residues: Small ribosomal subunit protein uS10 (103 aa).

Belongs to the universal ribosomal protein uS10 family. Part of the 30S ribosomal subunit.

Involved in the binding of tRNA to the ribosomes. This is Small ribosomal subunit protein uS10 from Azotobacter vinelandii (strain DJ / ATCC BAA-1303).